A 258-amino-acid polypeptide reads, in one-letter code: ATP synthase subunit a (258 aa).

The next 5 helical transmembrane spans lie at 38–58 (KPVW…YVGA), 94–114 (WFPY…IGLF), 118–138 (YPVT…FVLT), 193–213 (ILAG…FGLP), and 215–235 (AFVS…VAVI).

This sequence belongs to the ATPase A chain family. F-type ATPases have 2 components, CF(1) - the catalytic core - and CF(0) - the membrane proton channel. CF(1) has five subunits: alpha(3), beta(3), gamma(1), delta(1), epsilon(1). CF(0) has three main subunits: a(1), b(2) and c(9-12). The alpha and beta chains form an alternating ring which encloses part of the gamma chain. CF(1) is attached to CF(0) by a central stalk formed by the gamma and epsilon chains, while a peripheral stalk is formed by the delta and b chains.

The protein localises to the cell membrane. Functionally, key component of the proton channel; it plays a direct role in the translocation of protons across the membrane. This chain is ATP synthase subunit a, found in Rubrobacter xylanophilus (strain DSM 9941 / JCM 11954 / NBRC 16129 / PRD-1).